A 635-amino-acid polypeptide reads, in one-letter code: Chaperone protein HtpG (635 aa).

The tract at residues 1-344 (MSETATTNKE…SNDLPLNVSR (344 aa)) is a; substrate-binding. A b region spans residues 345 to 561 (EILQDNKITQ…DYEMGTQMAK (217 aa)). The c stretch occupies residues 562–635 (LLAAAGQPVP…AVNQLLAPSH (74 aa)).

The protein belongs to the heat shock protein 90 family. In terms of assembly, homodimer.

It is found in the cytoplasm. Its function is as follows. Molecular chaperone. Has ATPase activity. The chain is Chaperone protein HtpG from Vibrio cholerae serotype O1 (strain ATCC 39541 / Classical Ogawa 395 / O395).